The sequence spans 243 residues: 6-carboxyhexanoate--CoA ligase (243 aa).

It belongs to the BioW family. In terms of assembly, homodimer. Mg(2+) is required as a cofactor.

It carries out the reaction heptanedioate + ATP + CoA = 6-carboxyhexanoyl-CoA + AMP + diphosphate. It functions in the pathway metabolic intermediate metabolism; pimeloyl-CoA biosynthesis; pimeloyl-CoA from pimelate: step 1/1. Its function is as follows. Catalyzes the transformation of pimelate into pimeloyl-CoA with concomitant hydrolysis of ATP to AMP. The protein is 6-carboxyhexanoate--CoA ligase of Thermocrinis albus (strain DSM 14484 / JCM 11386 / HI 11/12).